Consider the following 295-residue polypeptide: Glycine--tRNA ligase alpha subunit (295 aa).

Belongs to the class-II aminoacyl-tRNA synthetase family. Tetramer of two alpha and two beta subunits.

It localises to the cytoplasm. The catalysed reaction is tRNA(Gly) + glycine + ATP = glycyl-tRNA(Gly) + AMP + diphosphate. This Prochlorococcus marinus (strain MIT 9215) protein is Glycine--tRNA ligase alpha subunit.